Consider the following 362-residue polypeptide: Serine/threonine-protein kinase-like protein At3g51990 (362 aa).

The signal sequence occupies residues 1-24; it reads MGYLSCKAGSAVAIAVSSAASTSG. Residues 21 to 32 are compositionally biased toward low complexity; sequence STSGSTSSKASA. Residues 21 to 43 form a disordered region; it reads STSGSTSSKASAPPESPIEDRPR. A Protein kinase domain is found at 59–329; the sequence is FDINNLLGRG…PGMEEVVGWL (271 aa). ATP-binding positions include 65–73 and K86; that span reads LGRGSHGSV. N-linked (GlcNAc...) asparagine glycosylation is present at N136. D185 serves as the catalytic Proton acceptor. Position 219 is a phosphoserine (S219). T220 and T225 each carry phosphothreonine. The residue at position 233 (Y233) is a Phosphotyrosine.

The protein belongs to the protein kinase superfamily. Ser/Thr protein kinase family.

The protein resides in the secreted. It catalyses the reaction L-seryl-[protein] + ATP = O-phospho-L-seryl-[protein] + ADP + H(+). The enzyme catalyses L-threonyl-[protein] + ATP = O-phospho-L-threonyl-[protein] + ADP + H(+). In Arabidopsis thaliana (Mouse-ear cress), this protein is Serine/threonine-protein kinase-like protein At3g51990.